The following is a 238-amino-acid chain: 7-cyano-7-deazaguanine synthase (238 aa).

Position 15–25 (15–25) interacts with ATP; the sequence is FSGGQDSTTCL. Residues C203, C218, C221, and C224 each coordinate Zn(2+).

The protein belongs to the QueC family. The cofactor is Zn(2+).

It catalyses the reaction 7-carboxy-7-deazaguanine + NH4(+) + ATP = 7-cyano-7-deazaguanine + ADP + phosphate + H2O + H(+). It functions in the pathway purine metabolism; 7-cyano-7-deazaguanine biosynthesis. Catalyzes the ATP-dependent conversion of 7-carboxy-7-deazaguanine (CDG) to 7-cyano-7-deazaguanine (preQ(0)). The chain is 7-cyano-7-deazaguanine synthase from Alkalilimnicola ehrlichii (strain ATCC BAA-1101 / DSM 17681 / MLHE-1).